Here is a 401-residue protein sequence, read N- to C-terminus: Argininosuccinate synthase (401 aa).

Residues 9–17 (AFSGGLDTS) and Ala35 each bind ATP. 2 residues coordinate L-citrulline: Tyr88 and Ser93. Residue Gly117 coordinates ATP. Positions 119, 123, and 124 each coordinate L-aspartate. Residue Asn123 coordinates L-citrulline. Residues Arg127 and Tyr273 each contribute to the L-citrulline site.

Belongs to the argininosuccinate synthase family. Type 1 subfamily. Homotetramer.

Its subcellular location is the cytoplasm. The catalysed reaction is L-citrulline + L-aspartate + ATP = 2-(N(omega)-L-arginino)succinate + AMP + diphosphate + H(+). It participates in amino-acid biosynthesis; L-arginine biosynthesis; L-arginine from L-ornithine and carbamoyl phosphate: step 2/3. The chain is Argininosuccinate synthase from Xylella fastidiosa (strain Temecula1 / ATCC 700964).